A 542-amino-acid chain; its full sequence is Signal peptide peptidase-like 5 (542 aa).

The signal sequence occupies residues M1 to G23. At G24 to E192 the chain is on the lumenal side. N-linked (GlcNAc...) asparagine glycosylation is found at N79 and N145. The PA domain maps to C92 to H167. The chain crosses the membrane as a helical span at residues V193–S213. The Cytoplasmic segment spans residues A214–D245. The chain crosses the membrane as a helical span at residues I246–Y266. The Lumenal segment spans residues K267–E275. A helical membrane pass occupies residues L276–L296. Over L297–A316 the chain is Cytoplasmic. The chain crosses the membrane as a helical span at residues V317–V337. Residues H338–T342 lie on the Lumenal side of the membrane. The helical transmembrane segment at Y343–V363 threads the bilayer. The Cytoplasmic portion of the chain corresponds to R364 to N367. A helical transmembrane segment spans residues L368–V388. D382 is an active-site residue. Topologically, residues S389–G426 are lumenal. A helical membrane pass occupies residues G427–L447. D435 is an active-site residue. The Cytoplasmic portion of the chain corresponds to R448–T459. Residues G460 to L480 traverse the membrane as a helical segment. The Lumenal portion of the chain corresponds to N481–H486. The chain crosses the membrane as a helical span at residues G487 to W507. Positions P489 to L491 match the PAL motif. Topologically, residues K508–Q542 are cytoplasmic.

Belongs to the peptidase A22B family. Glycosylated.

The protein resides in the endosome membrane. In terms of biological role, intramembrane-cleaving aspartic protease (I-CLiP) that cleaves type II membrane signal peptides in the hydrophobic plane of the membrane. The chain is Signal peptide peptidase-like 5 (SPPL5) from Oryza sativa subsp. japonica (Rice).